Reading from the N-terminus, the 138-residue chain is Translation initiation factor 5A (138 aa).

Residue Lys-37 is modified to Hypusine.

This sequence belongs to the eIF-5A family.

The protein resides in the cytoplasm. Its function is as follows. Functions by promoting the formation of the first peptide bond. This is Translation initiation factor 5A (eIF5A) from Thermococcus sibiricus (strain DSM 12597 / MM 739).